The following is a 431-amino-acid chain: Intraflagellar transport protein 38 (431 aa).

Residues 177 to 218 (SAAVQQRIKNLAAECNTLQEEVTTNKREKAKLEEQITQKKQS) are a coiled coil. Residues 346-431 (INTNAEIPDD…EELDPDNIEF (86 aa)) are disordered. The segment covering 352–370 (IPDDESYSYSYEEEEEEEQ) has biased composition (acidic residues). A compositionally biased stretch (basic and acidic residues) spans 384 to 405 (PETHSNGEKHRGLDELSHKSNE). Residues 420–431 (GGEELDPDNIEF) are compositionally biased toward acidic residues.

The protein belongs to the CLUAP1 family.

The protein resides in the cell projection. It localises to the cilium. Its subcellular location is the flagellum. It is found in the cytoplasm. The protein localises to the cytoskeleton. The protein resides in the flagellum axoneme. It localises to the flagellum basal body. Functionally, component of the intraflagellar transport complex B (IFT-B) involved in flagellar assembly. The polypeptide is Intraflagellar transport protein 38 (Giardia intestinalis (strain ATCC 50803 / WB clone C6) (Giardia lamblia)).